The sequence spans 612 residues: Dihydroxy-acid dehydratase (612 aa).

A Mg(2+)-binding site is contributed by aspartate 81. Cysteine 122 is a binding site for [2Fe-2S] cluster. Mg(2+) contacts are provided by aspartate 123 and lysine 124. Lysine 124 is modified (N6-carboxylysine). Cysteine 193 contacts [2Fe-2S] cluster. Mg(2+) is bound at residue glutamate 489. Serine 515 functions as the Proton acceptor in the catalytic mechanism.

Belongs to the IlvD/Edd family. Homodimer. [2Fe-2S] cluster serves as cofactor. It depends on Mg(2+) as a cofactor.

It carries out the reaction (2R)-2,3-dihydroxy-3-methylbutanoate = 3-methyl-2-oxobutanoate + H2O. The enzyme catalyses (2R,3R)-2,3-dihydroxy-3-methylpentanoate = (S)-3-methyl-2-oxopentanoate + H2O. Its pathway is amino-acid biosynthesis; L-isoleucine biosynthesis; L-isoleucine from 2-oxobutanoate: step 3/4. The protein operates within amino-acid biosynthesis; L-valine biosynthesis; L-valine from pyruvate: step 3/4. In terms of biological role, functions in the biosynthesis of branched-chain amino acids. Catalyzes the dehydration of (2R,3R)-2,3-dihydroxy-3-methylpentanoate (2,3-dihydroxy-3-methylvalerate) into 2-oxo-3-methylpentanoate (2-oxo-3-methylvalerate) and of (2R)-2,3-dihydroxy-3-methylbutanoate (2,3-dihydroxyisovalerate) into 2-oxo-3-methylbutanoate (2-oxoisovalerate), the penultimate precursor to L-isoleucine and L-valine, respectively. This chain is Dihydroxy-acid dehydratase, found in Xanthomonas campestris pv. campestris (strain B100).